The primary structure comprises 346 residues: Magnesium-chelatase 38 kDa subunit (346 aa).

34–41 serves as a coordination point for ATP; that stretch reads GHRGTGKS.

Belongs to the Mg-chelatase subunits D/I family.

It carries out the reaction protoporphyrin IX + Mg(2+) + ATP + H2O = Mg-protoporphyrin IX + ADP + phosphate + 3 H(+). It participates in porphyrin-containing compound metabolism; bacteriochlorophyll biosynthesis. Involved in bacteriochlorophyll biosynthesis; introduces a magnesium ion into protoporphyrin IX to yield Mg-protoporphyrin IX. The chain is Magnesium-chelatase 38 kDa subunit (bchI) from Chlorobaculum parvum (strain DSM 263 / NCIMB 8327) (Chlorobium vibrioforme subsp. thiosulfatophilum).